The chain runs to 512 residues: ATP synthase subunit alpha (512 aa).

Residue 169 to 176 (GDRQTGKT) coordinates ATP.

The protein belongs to the ATPase alpha/beta chains family. F-type ATPases have 2 components, CF(1) - the catalytic core - and CF(0) - the membrane proton channel. CF(1) has five subunits: alpha(3), beta(3), gamma(1), delta(1), epsilon(1). CF(0) has three main subunits: a(1), b(2) and c(9-12). The alpha and beta chains form an alternating ring which encloses part of the gamma chain. CF(1) is attached to CF(0) by a central stalk formed by the gamma and epsilon chains, while a peripheral stalk is formed by the delta and b chains.

It localises to the cell inner membrane. The enzyme catalyses ATP + H2O + 4 H(+)(in) = ADP + phosphate + 5 H(+)(out). Functionally, produces ATP from ADP in the presence of a proton gradient across the membrane. The alpha chain is a regulatory subunit. In Orientia tsutsugamushi (strain Ikeda) (Rickettsia tsutsugamushi), this protein is ATP synthase subunit alpha.